The primary structure comprises 301 residues: 4-hydroxy-tetrahydrodipicolinate synthase (301 aa).

T53 lines the pyruvate pocket. Y142 (proton donor/acceptor) is an active-site residue. The active-site Schiff-base intermediate with substrate is K170. V212 is a binding site for pyruvate.

This sequence belongs to the DapA family. Homotetramer; dimer of dimers.

The protein resides in the cytoplasm. The enzyme catalyses L-aspartate 4-semialdehyde + pyruvate = (2S,4S)-4-hydroxy-2,3,4,5-tetrahydrodipicolinate + H2O + H(+). Its pathway is amino-acid biosynthesis; L-lysine biosynthesis via DAP pathway; (S)-tetrahydrodipicolinate from L-aspartate: step 3/4. Functionally, catalyzes the condensation of (S)-aspartate-beta-semialdehyde [(S)-ASA] and pyruvate to 4-hydroxy-tetrahydrodipicolinate (HTPA). The polypeptide is 4-hydroxy-tetrahydrodipicolinate synthase (Synechocystis sp. (strain ATCC 27184 / PCC 6803 / Kazusa)).